A 335-amino-acid polypeptide reads, in one-letter code: Cell division protein ZipA (335 aa).

Residues 1 to 4 (MDLN) are Periplasmic-facing. A helical membrane pass occupies residues 5-25 (AILIILGVIALIILVAHGIWS). Over 26–335 (NRCEKSQYFE…AERDYLARVS (310 aa)) the chain is Cytoplasmic.

This sequence belongs to the ZipA family. In terms of assembly, interacts with FtsZ via their C-terminal domains.

The protein localises to the cell inner membrane. Essential cell division protein that stabilizes the FtsZ protofilaments by cross-linking them and that serves as a cytoplasmic membrane anchor for the Z ring. Also required for the recruitment to the septal ring of downstream cell division proteins. The chain is Cell division protein ZipA from Histophilus somni (strain 129Pt) (Haemophilus somnus).